The sequence spans 129 residues: UPF0325 protein ESA_03178 (129 aa).

The protein belongs to the UPF0325 family.

This Cronobacter sakazakii (strain ATCC BAA-894) (Enterobacter sakazakii) protein is UPF0325 protein ESA_03178.